The chain runs to 69 residues: Dermaseptin-H3 (69 aa).

Positions 1-22 (MAFLKKSLFLVLFLGMVSLSIC) are cleaved as a signal peptide. Positions 23–43 (EEEKRENEDEEKQEDDEQSEM) are excised as a propeptide. A disordered region spans residues 24 to 44 (EEKRENEDEEKQEDDEQSEMK). A compositionally biased stretch (acidic residues) spans 30–40 (EDEEKQEDDEQ). Position 66 is a leucine amide (L66). Residues 68 to 69 (EQ) constitute a propeptide that is removed on maturation.

The protein belongs to the frog skin active peptide (FSAP) family. Dermaseptin subfamily. Expressed by the skin glands.

It is found in the secreted. Possesses a potent antimicrobial activity against Gram-positive and Gram-negative bacteria. Probably acts by disturbing membrane functions with its amphipathic structure. The polypeptide is Dermaseptin-H3 (Pithecopus azureus (Orange-legged monkey tree frog)).